The sequence spans 375 residues: DNA replication and repair protein RecF (375 aa).

30-37 serves as a coordination point for ATP; that stretch reads GDNAQGKT.

This sequence belongs to the RecF family.

It localises to the cytoplasm. Its function is as follows. The RecF protein is involved in DNA metabolism; it is required for DNA replication and normal SOS inducibility. RecF binds preferentially to single-stranded, linear DNA. It also seems to bind ATP. The chain is DNA replication and repair protein RecF from Symbiobacterium thermophilum (strain DSM 24528 / JCM 14929 / IAM 14863 / T).